A 347-amino-acid polypeptide reads, in one-letter code: MRIEEDLKLGFKDVLIRPKRSTLKSRSDVELERQFTFKHSGQSWSGVPIIAANMDTVGTFSMASALASFDILTAVHKHYSVEEWQAFINNSSADVLKHVMVSTGTSDADFEKTKQILDLNPALNFVCIDVANGYSEHFVQFVAKAREAWPTKTICAGNVVTGEMCEELILSGADIVKVGIGPGSVCTTRVKTGVGYPQLSAVIECADAAHGLGGMIVSDGGCTTPGDVAKAFGGGADFVMLGGMLAGHEESGGRIVEENGEKFMLFYGMSSESAMKRHVGGVAEYRAAEGKTVKLPLRGPVENTARDILGGLRSACTYVGASRLKELTKRTTFIRVLEQENRIFNNL.

108 to 131 (ADFEKTKQILDLNPALNFVCIDVA) provides a ligand contact to NADP(+). Residues glycine 181 and glycine 183 each contribute to the K(+) site. Cysteine 186 acts as the Thioimidate intermediate in catalysis. Residue 216–239 (IVSDGGCTTPGDVAKAFGGGADFV) participates in NADP(+) binding.

Belongs to the IMPDH/GMPR family. GuaC type 1 subfamily. As to quaternary structure, homotetramer.

The enzyme catalyses IMP + NH4(+) + NADP(+) = GMP + NADPH + 2 H(+). Catalyzes the irreversible NADPH-dependent deamination of GMP to IMP. It functions in the conversion of nucleobase, nucleoside and nucleotide derivatives of G to A nucleotides, and in maintaining the intracellular balance of A and G nucleotides. In Escherichia coli O7:K1 (strain IAI39 / ExPEC), this protein is GMP reductase.